The chain runs to 285 residues: Bifunctional protein FolD (285 aa).

NADP(+)-binding positions include 165–167 (GRS) and Ser190.

This sequence belongs to the tetrahydrofolate dehydrogenase/cyclohydrolase family. As to quaternary structure, homodimer.

The enzyme catalyses (6R)-5,10-methylene-5,6,7,8-tetrahydrofolate + NADP(+) = (6R)-5,10-methenyltetrahydrofolate + NADPH. The catalysed reaction is (6R)-5,10-methenyltetrahydrofolate + H2O = (6R)-10-formyltetrahydrofolate + H(+). Its pathway is one-carbon metabolism; tetrahydrofolate interconversion. Functionally, catalyzes the oxidation of 5,10-methylenetetrahydrofolate to 5,10-methenyltetrahydrofolate and then the hydrolysis of 5,10-methenyltetrahydrofolate to 10-formyltetrahydrofolate. This is Bifunctional protein FolD from Streptococcus pneumoniae serotype 4 (strain ATCC BAA-334 / TIGR4).